The sequence spans 474 residues: E3 ubiquitin-protein ligase CBL-C (474 aa).

The tract at residues 7–145 (PWGRQWEEAR…HALFPGGKYC (139 aa)) is 4H. The region spanning 7-321 (PWGRQWEEAR…GKTHNPDLTE (315 aa)) is the Cbl-PTB domain. Residues 146-218 (GHMYQLTKAP…FEFDVFTRLF (73 aa)) form an EF-hand-like region. Asp199, Thr201, and Glu210 together coordinate Ca(2+). The tract at residues 219–321 (QPWPTLLKNW…GKTHNPDLTE (103 aa)) is SH2-like. Arg264 provides a ligand contact to 4-O-phospho-L-tyrosine. The segment at 322-350 (LGQAEPQQRIHVSEEQLQLYWAMDSTFEL) is linker. Tyr341 carries the post-translational modification Phosphotyrosine; by SRC. The RING-type zinc finger occupies 351–390 (CKICAESNKDVKIEPCGHLLCSCCLAAWQHSDSQTCPFCR). Positions 351–474 (CKICAESNKD…ALGPQDPAPA (124 aa)) are interaction with RET. The disordered stretch occupies residues 409 to 474 (TAEDSGNSSD…ALGPQDPAPA (66 aa)). Over residues 432–441 (SAPPLPPRPD) the composition is skewed to pro residues.

In terms of assembly, interacts with ubiquitin-conjugating enzyme E2 UBE2D2 and UBE2D3. Isoform 1 interacts with EGFR (tyrosine phosphorylated). Interacts with the SH3 domain proteins LYN and CRK. Interacts (via RING-type zinc finger) with TGFB1I1 (via LIM zinc-binding domain 2); the interaction is direct and enhances the E3 activity. Interacts directly with RET (inactive) and CD2AP; dissociates from RET upon RET activation by GDNF which also increases the interaction with CD2AP suggesting dissociation as CBLC:CD2AP complex. Interacts with SRC; the interaction is enhanced when SRC is phosphorylated at 'Tyr-419'. In terms of processing, phosphorylated on multiple tyrosine residues by SRC. Isoform 1, but not isoform 2, is phosphorylated on tyrosines by EGFR. Post-translationally, autoubiquitinated when phosphorylated at Tyr-341, enhanced by SRC; suggesting proteasomal degradation. As to expression, ubiquitous.

The catalysed reaction is S-ubiquitinyl-[E2 ubiquitin-conjugating enzyme]-L-cysteine + [acceptor protein]-L-lysine = [E2 ubiquitin-conjugating enzyme]-L-cysteine + N(6)-ubiquitinyl-[acceptor protein]-L-lysine.. With respect to regulation, phosphorylation at Tyr-341 is necessary and sufficient for the activation of E3 activity. Its function is as follows. Acts as an E3 ubiquitin-protein ligase, which accepts ubiquitin from specific E2 ubiquitin-conjugating enzymes, and then transfers it to substrates promoting their degradation by the proteasome. Functionally coupled with the E2 ubiquitin-protein ligases UB2D1, UB2D2 and UB2D3. Regulator of EGFR mediated signal transduction; upon EGF activation, ubiquitinates EGFR. Isoform 1, but not isoform 2, inhibits EGF stimulated MAPK1 activation. Promotes ubiquitination of SRC phosphorylated at 'Tyr-419'. In collaboration with CD2AP may act as regulatory checkpoint for Ret signaling by modulating the rate of RET degradation after ligand activation; CD2AP converts it from an inhibitor to a promoter of RET degradation; the function limits the potency of GDNF on neuronal survival. The sequence is that of E3 ubiquitin-protein ligase CBL-C (CBLC) from Homo sapiens (Human).